Here is a 296-residue protein sequence, read N- to C-terminus: Glycine--tRNA ligase alpha subunit (296 aa).

This sequence belongs to the class-II aminoacyl-tRNA synthetase family. In terms of assembly, tetramer of two alpha and two beta subunits.

It localises to the cytoplasm. It carries out the reaction tRNA(Gly) + glycine + ATP = glycyl-tRNA(Gly) + AMP + diphosphate. The chain is Glycine--tRNA ligase alpha subunit from Polynucleobacter necessarius subsp. necessarius (strain STIR1).